The primary structure comprises 596 residues: MLGLATTVTLESSGCSSKMCFRLLCSVSSRPARGTFVEDACWVYIISHTFFPFNMTWRVVNIFISLSMDGALMEIGPYRLQDDHTLIYNNGSWDEFANLLFVDQPVGTGFSYVSTDSYVRELGPMADQFVTFLERWFNVFPEYERDDIYIAGESYAGQYIPYIADAIVRRNEKLSANGTSWNVQGLLIGNGWISPLEQYRSYLPFSYKEGVLDKNSDGAKAAESQLSKCMSKLKEVGKFGVHVDECERVLELILDTTKVDGKCINMYDVRLEDTPDACGMNWPPDISLVTSYLRRPDVVKALNINEDKTTGWRECSPGVGRNLQATESVPSVQLLPGLLERGMPIVLFSGDKDLICNHIGTEDLIHNMTWLNATGFELSPDVWAPRHNWEFEGSAAGIYQQARNLTYVKFYNASHMVPFDFPRRSRDMLDRFLGIDITSIGGDPADSRIDGLKGAPTSVGAHPNSTTAEEKEKEKIKIAAWEAYYKSGEVALVVVAIAASLWGFFIWRSKRREKGLEYKGIYPNLESFSSASLATFRGKRRGRMDVESAPRPDEAELETLYNAAEGSDPQDGEENFSDGKGDNEKAQSHAGMGKSR.

Positions 1–17 (MLGLATTVTLESSGCSS) are cleaved as a signal peptide. Topologically, residues 18 to 486 (KMCFRLLCSV…KIAAWEAYYK (469 aa)) are lumenal. Residues asparagine 54 and asparagine 90 are each glycosylated (N-linked (GlcNAc...) asparagine). Serine 154 is an active-site residue. N-linked (GlcNAc...) asparagine glycosylation is found at asparagine 177, asparagine 367, asparagine 372, asparagine 404, asparagine 412, and asparagine 464. The segment at 447-469 (SRIDGLKGAPTSVGAHPNSTTAE) is disordered. The helical transmembrane segment at 487–507 (SGEVALVVVAIAASLWGFFIW) threads the bilayer. Topologically, residues 508 to 596 (RSKRREKGLE…QSHAGMGKSR (89 aa)) are cytoplasmic. Positions 539-596 (KRRGRMDVESAPRPDEAELETLYNAAEGSDPQDGEENFSDGKGDNEKAQSHAGMGKSR) are disordered. Basic and acidic residues-rich tracts occupy residues 543-554 (RMDVESAPRPDE) and 577-587 (SDGKGDNEKAQ).

It belongs to the peptidase S10 family.

It is found in the golgi apparatus. The protein resides in the trans-Golgi network membrane. It carries out the reaction Preferential release of a C-terminal arginine or lysine residue.. Protease with a carboxypeptidase B-like function involved in the C-terminal processing of the lysine and arginine residues from protein precursors. Promotes cell fusion and is involved in the programmed cell death. The polypeptide is Pheromone-processing carboxypeptidase KEX1 (KEX1) (Arthroderma benhamiae (strain ATCC MYA-4681 / CBS 112371) (Trichophyton mentagrophytes)).